A 184-amino-acid polypeptide reads, in one-letter code: Pyridoxal 5'-phosphate synthase subunit PdxT (184 aa).

L-glutamine is bound at residue 46–48 (GES). C75 serves as the catalytic Nucleophile. Residues R101 and 129–130 (IR) each bind L-glutamine. Active-site charge relay system residues include H165 and E167.

Belongs to the glutaminase PdxT/SNO family. In terms of assembly, in the presence of PdxS, forms a dodecamer of heterodimers. Only shows activity in the heterodimer.

The catalysed reaction is aldehydo-D-ribose 5-phosphate + D-glyceraldehyde 3-phosphate + L-glutamine = pyridoxal 5'-phosphate + L-glutamate + phosphate + 3 H2O + H(+). It carries out the reaction L-glutamine + H2O = L-glutamate + NH4(+). It functions in the pathway cofactor biosynthesis; pyridoxal 5'-phosphate biosynthesis. Catalyzes the hydrolysis of glutamine to glutamate and ammonia as part of the biosynthesis of pyridoxal 5'-phosphate. The resulting ammonia molecule is channeled to the active site of PdxS. This chain is Pyridoxal 5'-phosphate synthase subunit PdxT, found in Staphylococcus haemolyticus (strain JCSC1435).